We begin with the raw amino-acid sequence, 188 residues long: Ribosome-recycling factor (188 aa).

The protein belongs to the RRF family.

It is found in the cytoplasm. In terms of biological role, responsible for the release of ribosomes from messenger RNA at the termination of protein biosynthesis. May increase the efficiency of translation by recycling ribosomes from one round of translation to another. The protein is Ribosome-recycling factor of Dinoroseobacter shibae (strain DSM 16493 / NCIMB 14021 / DFL 12).